A 219-amino-acid chain; its full sequence is Large ribosomal subunit protein uL1 (219 aa).

The protein belongs to the universal ribosomal protein uL1 family. In terms of assembly, part of the 50S ribosomal subunit.

Functionally, binds directly to 23S rRNA. Probably involved in E site tRNA release. Protein L1 is also a translational repressor protein, it controls the translation of its operon by binding to its mRNA. The polypeptide is Large ribosomal subunit protein uL1 (Pyrococcus horikoshii (strain ATCC 700860 / DSM 12428 / JCM 9974 / NBRC 100139 / OT-3)).